The sequence spans 367 residues: UDP-N-acetylenolpyruvoylglucosamine reductase (367 aa).

The 177-residue stretch at 29-205 folds into the FAD-binding PCMH-type domain; it reads VGPVAQRVIT…LEVEFKLDAS (177 aa). Residue R177 is part of the active site. S260 serves as the catalytic Proton donor. Residue E359 is part of the active site.

Belongs to the MurB family. The cofactor is FAD.

The protein localises to the cytoplasm. The catalysed reaction is UDP-N-acetyl-alpha-D-muramate + NADP(+) = UDP-N-acetyl-3-O-(1-carboxyvinyl)-alpha-D-glucosamine + NADPH + H(+). Its pathway is cell wall biogenesis; peptidoglycan biosynthesis. In terms of biological role, cell wall formation. This is UDP-N-acetylenolpyruvoylglucosamine reductase from Mycobacterium leprae (strain Br4923).